The primary structure comprises 498 residues: ATP synthase subunit beta, chloroplastic (498 aa).

172–179 (GGAGVGKT) is a binding site for ATP.

It belongs to the ATPase alpha/beta chains family. F-type ATPases have 2 components, CF(1) - the catalytic core - and CF(0) - the membrane proton channel. CF(1) has five subunits: alpha(3), beta(3), gamma(1), delta(1), epsilon(1). CF(0) has four main subunits: a(1), b(1), b'(1) and c(9-12).

The protein resides in the plastid. Its subcellular location is the chloroplast thylakoid membrane. The enzyme catalyses ATP + H2O + 4 H(+)(in) = ADP + phosphate + 5 H(+)(out). Produces ATP from ADP in the presence of a proton gradient across the membrane. The catalytic sites are hosted primarily by the beta subunits. This Schisandra sphenanthera (Southern magnolia vine) protein is ATP synthase subunit beta, chloroplastic.